Reading from the N-terminus, the 1549-residue chain is Trichohyalin (1549 aa).

The interval Met1 to Gln91 is S-100-like. EF-hand domains follow at residues Cys23–Pro48 and His49–Ala84. Positions 27, 32, 62, 64, 66, and 73 each coordinate Ca(2+). Disordered stretches follow at residues Glu97–Arg125, Leu157–Leu180, Leu262–Gln359, and Gln404–Arg448. Basic and acidic residues-rich tracts occupy residues Leu171–Leu180, Leu262–Gln278, and His317–Gln335. The span at Glu336–Glu348 shows a compositional bias: low complexity. Residues Asp349–Gln359 show a composition bias toward basic and acidic residues. 14 consecutive repeat copies span residues Glu413 to Arg448, Glu449 to Arg476, Glu477 to Arg504, Glu505 to Arg532, Glu533 to Arg560, Glu561 to Arg588, Glu589 to Arg616, Glu617 to Arg644, Glu645 to Arg678, Glu679 to Arg706, Glu707 to Arg742, Glu743 to Lys771, Arg772 to Arg796, and Glu797 to Leu832. The segment at Glu413–Leu832 is 14 X 28 AA approximate tandem repeats. Disordered regions lie at residues Arg782–Glu803, Glu839–Arg942, and Gln980–Arg1000. 3 stretches are compositionally biased toward basic and acidic residues: residues Phe850–Val884, Pro895–Ser918, and Leu925–Arg942. 23 tandem repeats follow at residues Asp938–Glu961, Asp962–Arg985, Asp986–Arg1021, Asp1022–Arg1044, Asp1045–Arg1067, Asp1068–Glu1090, Arg1091–Arg1121, Asp1122–Arg1144, Asp1145–Arg1167, Asp1168–Arg1197, Asp1198–Arg1227, Asp1228–Arg1250, Asp1251–Arg1273, Asp1274–Arg1296, Asp1297–Arg1319, Asp1320–Arg1342, Asp1343–Gly1368, Val1369–Arg1391, Asp1392–Gln1416, Asp1417–Gln1439, Gln1440–Glu1461, Gln1462–Gln1484, and Leu1485–Gln1507. The segment at Asp938–Gln1507 is 23 X 23 AA approximate tandem repeats. The span at Gln1489–Lys1523 shows a compositional bias: basic and acidic residues. A disordered region spans residues Gln1489–Pro1549.

It belongs to the S100-fused protein family. Homodimer. Post-translationally, substrate of transglutaminase. Some 200 arginines are probably converted to citrullines by peptidylarginine deimidase. In terms of tissue distribution, found in the hard keratinizing tissues such as the inner root sheath (IRS) of hair follicles and medulla, and in the epithelia of the tongue, hoof and rumen.

Its function is as follows. Intermediate filament-associated protein that associates in regular arrays with keratin intermediate filaments (KIF) of the inner root sheath cells of the hair follicle and the granular layer of the epidermis. It later becomes cross-linked to KIF by isodipeptide bonds. It may serve as scaffold protein, together with involucrin, in the organization of the cell envelope or even anchor the cell envelope to the KIF network. It may be involved in its own calcium-dependent postsynthetic processing during terminal differentiation. This Ovis aries (Sheep) protein is Trichohyalin (TCHH).